Here is a 949-residue protein sequence, read N- to C-terminus: Pyruvate, phosphate dikinase, chloroplastic (949 aa).

The transit peptide at 1 to 74 (MASAFKGILI…VMAPASDPTS (74 aa)) directs the protein to the chloroplast. Residue T530 is modified to Phosphothreonine; by PDRP1. H532 serves as the catalytic Tele-phosphohistidine intermediate. R638, R695, E824, G845, T846, N847, and D848 together coordinate substrate. Residue E824 participates in Mg(2+) binding. Mg(2+) is bound at residue D848. C910 serves as the catalytic Proton donor.

It belongs to the PEP-utilizing enzyme family. As to quaternary structure, homodimer. It depends on Mg(2+) as a cofactor. In terms of processing, phosphorylation of Thr-530 in the dark inactivates the enzyme. Dephosphorylation upon light stimulation reactivates the enzyme.

The protein resides in the plastid. Its subcellular location is the chloroplast. It catalyses the reaction pyruvate + phosphate + ATP = phosphoenolpyruvate + AMP + diphosphate + H(+). With respect to regulation, activated by light-induced dephosphorylation. Inhibited by dark-induced phosphorylation. Both reactions are catalyzed by PDRP1. Functionally, formation of phosphoenolpyruvate, which is the primary acceptor of CO(2) in C4 and some Crassulacean acid metabolism plants. The sequence is that of Pyruvate, phosphate dikinase, chloroplastic (PPD) from Mesembryanthemum crystallinum (Common ice plant).